A 606-amino-acid polypeptide reads, in one-letter code: MNKKYGTSSNNHDNKKDKKNNADKNKNKKNTTTGEENKDSNKSLVNNDSKKNDSSKNKYNIVKANIKNIFASDKKNEKSDKNEKNESSKSSKNTETYTNVNDKKSNNLITKGSNDKKKKKKDSKKNSSNNNNNNTIVDISDGDYTNDEEGTNKPKRNWKGRTFSRFTPGGVRSSTVLFICTAIGVGFLSIPYVFSKLGIILSIILIILNAFESYVTTNILCTSSLEHNTFVYGNLLKKIGNKYYKTIIDFGLSFGFVSSYILILILISNFLSTIFYVFNFPTLFTNNVFLVILICLLILPITFRNKVGSLNHFLIFSLFSLSITVLTIGLQTKSYNNLLINKEVNLFKMDKHFFKCFNILLFSFSQQPNACFITGQFNQPTHRRLNKSTFRSVILQVIFYTLFGILGYFSFLNTAKDNIVLNYENSNVSILLCKFLLSLTFFFSVPLNFMGSYQSMLALGITTRDALYKLYTYIFRRTGYSANLSLLLSEYTNDPYQETHADNITEHSSVSESQTDDQNQRMWISVIVTIFCALIACKVKKLSNVIGIGGGITSTLISCLLPNLIYYKNRHNVSNKLKRYSTLFMLCFFSFMGFLSVVVTTLNLIL.

The tract at residues 1 to 156 (MNKKYGTSSN…DEEGTNKPKR (156 aa)) is disordered. Basic and acidic residues-rich tracts occupy residues 12–25 (HDNK…ADKN) and 72–89 (SDKK…ESSK). Over residues 140 to 149 (SDGDYTNDEE) the composition is skewed to acidic residues. Transmembrane regions (helical) follow at residues 175–194 (TVLF…PYVF), 200–225 (ILSI…TSSL), 246–271 (TIID…SNFL), 283–301 (LFTN…ILPI), 313–332 (FLIF…GLQT), 352–372 (HFFK…NACF), 393–412 (VILQ…FSFL), 428–449 (VSIL…PLNF), 522–539 (MWIS…ACKV), 545–567 (VIGI…LIYY), and 579–605 (RYST…LNLI).

The protein belongs to the amino acid/polyamine transporter 2 family.

It localises to the vacuole membrane. Its function is as follows. Putative amino acid transporter. Probably transports tryptophan. Involved in maintaining the osmotic homeostasis of the digestive vacuole. Important for the timely development and growth of the asexual-stage parasites and male gametocyte maturation. This is Putative amino acid transporter AAT1 from Plasmodium falciparum (isolate 3D7).